The primary structure comprises 4250 residues: MEECNKEGPSSSSQGPGYCPVKVPESHDLEKILQESNYHPERNPLNPDPKTPPLPLTDLRQPRKSPLTGTDKKYPLMKQRGFYSDILSPGTLDKLGNVCCGPYMSQNLIRQADLDKFTPKVDSFVIPEDFQERVEQQIIGATTRLLTQTDFPLQSYEPKVQVPFQVLPGQCPRKIEIERRKQQYLRLDIEQLLTSEGIDSNKLMPRHPDLQHPQTIEQGRDPLFPIYLPLKVFDNEEFDCRTPTEWLNMGLEPGSQNRKPVPGKALLPTDDDLGHEDPKNQELDYRWCEVGVLDYDEEKKLYLVQKTDKRGLVRDEMGMPILNGGITPAGRPPLLATQYWVPRIQLLFCAEDPRVFTQRVVQANALRKYTEALLMYNLYVDCMPTEGRRVINEQSLSKIKQWALSTPRMRKGQSVLEHLSCLAREVNLDYERSMNKINFDQIVSSNPETFSYVTLPEKEEEKVPNQGLVSVPEYPFREQKEDFTFVSLLTRPEVITALSKVRAECNKVTSMSLFHSSLSKYSRLEEFEQIQSQTFSQVQMFLKDSWISTLKVAMRGSLRDMSKGWYNLYETNWEVYLMSKLRKLMELIKYMLQDTLRFLVQDSLGSFTQFIGDACCSVLECVDDMDWGEDLVNSPYKPRKNPLFIVDLVLDNSGVHYSTPLEHFEMILLNLFDKGILATHAVPQLEKLVMEDIFISGDPLLESVGLHEPLVEELRANITNAMHKAMMPLQAYAKEYRKYLELNNNDISTFLKTYQTQCPSAEEVREVVITHLKEKEILDNSLPSSIIIGPFYINVDNVKQSLSKKRKALATSMLDILAKNLHKEVDSICEEFRSISRKIYEKPNSIEELAELRDWMKGIPEKLVFLEERIVKVMSDYEVMDEFFYNLTTDDFNDKWAANNWPSKILGQIDMVRQQHVEDEEKFRKIQLMDQNNFQEKLEGLQLVVAGFSIHVEIARAHEIANEVRRVKKQLKDCQQLAMLYNNRERIFGLPITNYDKLSRMVKEFQPYLDLWTTASDWLRWSESWMNDPLSAIDAEQLEKNVIESFKTMHKCVKQFKDIPACQEVALDIRTRIEEFKPYIPLIQGLRNPGMRNRHWEVLSNEININVRPKANLTFARCLEMNLQDHIESISKVAEVAGKEYAIEQALDKMEKEWSSILFNVLPYKETDTYILKSPDEASQLLDDHIVMTQSMSFSPYKKPFEQRINSWETKLKLTQEVLEEWLNCQRAWLYLEPIFSSEDITRQLPVESKRYQTMERIWRKIMKNAYENREVINVCSDQRLLDSLRDCNKLLDLVQKGLSEYLETKRTAFPRFYFLSDDELLEILSQTKDPTAVQPHLRKCFENIARLLFQEDLEITHMYSAEGEEVKLSFSIYPSSNVEDWLLEVERSMKASVHDIIEMAIKAYPTMLRTEWVLNWPGQVTIAGCQTYWTMEVAEALEAGNISSKLFPQLSKQLSDLVALVRGKLSRMQRMVLSALIVIEVHAKDVVSKLIDENVVSVHDFEWISQLRYYWTKDDLYIRAVNAEFIYGYEYLGNSGRLVITPLTDRCYLTLTGALHLKFGGAPAGPAGTGKTETTKDLGKALAIQTVVFNCSDQLDFMAMGKFFKGLASAGAWACFDEFNRIDIEVLSVVAQQITTIQKAQQQRVERFMFEGVEIPLVPSCAVFITMNPGYAGRTELPDNLKALFRPVAMMVPDYAMIAEISLYSFGFNEANVLAKKITTTFKLSSEQLSSQDHYDFGMRAVKTVISAAGNLKRENPTMNEELICLRAIRDVNVPKFLQEDLKLFSGIVSDLFPTIKEEETDYGILDQAIRRSCEKNNLKDVEGFLIKCIQLYETTVVRHGLMLVGPTGSGKSNCYRVLAAAMTLLKGKPSISGGVYEAVNYYVLNPKSITMGQLYGEFDLLTHEWTDGIFSSLIRAGAIASDTNKKWYMFDGPVDAVWIENMNTVLDDNKKLCLSSGEIIKLTEAMTMMFEVQDLAVASPATVSRCGMVYLEPSILGLMPFVECWLKRLPAIIKPYEEQFKSLFTKYLENSINFVRNTVKEVIASTNSNLTMSLLKLLDCFFRPFLPREGLKKIPSEKLSHIPELIEPWFIFSLVWSVGATGDHTSRISFSQWLRLKMRLEQVKLGFPEDGLVYDYRLDDAGISSTEDDDEEEDENKQVSWVKWMDYSAPFTMMPDTNYCNIIVPTMDTVQMSYLLGMLLTNHKPVLCIGPTGTGKTLTVSNKLLKYLPLEYISHFLTFSARTSANQTQDLIDSKLDKRRKGVFGPPLGRNFIFFIDDLNMPALETYGAQPPIELLRQWMDHGGWYDRKVIGAFKNLVDINFVCAMGPPGGGRNAITPRLTRHFNYLSFIEMDEVSKKRIFSIILECWMDGLLGEKSYREPVPGAPNIDDLTEPLVDATINVYGIITSQLLPTPAKSHYTFNLRDLSKVFQGMLMAEPSKVEDKVQLLRLWYHENCRVFRDRLVNEEDRSWFDELLEAQMEEFGVAFNKVCPFQPILYGDFMSPGSDVKSYELITSESKMMQVIEEYMEDYNQINTAKLRLVLFVDAMSHICRISRTLRQALGNALLLGVGGSGRSSLTRLASHMAEYECFQIELSKNYGMSEWREDVKKVLLKAGLQNLPITFLFSDTQIKNESFLEDINNVLNSGDIPNIYSADEQDQIINTMRPYIQEQGLQPTKANLMAAYTGRVRSNIHMVLCMSPIGEVFRARLRQFPSLVNCCTIDWFNEWPAEALKSVATTFLSEIPELECSEEVIQGLIQVCVFIHQSVASKCVEYLAELARHNYVTPKSYLELLNIFSILIGQKKMELKTAKNRMKSGLDKLLRTSEDVAKMQEELEIMRPLLEEAAKDTMLTMEQIKVDTAIAEETRKSVQAEEIKANEKANKAQAIADDAQKDLDEALPALDAALASLRNLNKNDVTEVRAMQRPPPGVKLVIEAVCIMKGIKPKKVPGEKPGSKVDDYWEPGKGLLQDPGRFLESLFKFDKDNIGEAVIKAIQPYIDNEEFQPAAIAKVSKACTSICQWVRAMHKYHFVAKAVEPKRQALREAQDDLEVTQRILEEAKHHLHEVEDGIATMQAKYRECVAKKEELEMKCEQCEQRLGRADKLINGLADEKVRWQETVENLENMLDNIFGDVLVAAGFVAYLGPFTGQYRTTLYEYWVNQLTVHHVPHTSKPTLITTLGNPVKIRSWQIAGLPNDTLSVENGVINQFSQRWTHFIDPQGQANKWIKNMERESGLDVFKLSDRDFLRSMENAIRFGKPCLLENVGEELDPALEPVLLKQTYKQQGNIVLKLGDTVIPYHEDFRMYITTKLPNPHYSPEISTKLTLINFTLSPSGLEDQLLGQVVAEERPDLEEAKNQLIVSNAKMRQELKDIEDQILYRLSSSEGNPVDDMELIKVLEASKMKAAEIQAKVRIAEQTEKDIDLTRMEYIPVAVRTQILFFCVSDLANVDPMYQYSLEWFLNIFLSGIANSERADNLKKRIVNINRYLTFSLYSNVCRSLFEKHKLMFAFLLCVRIMMNEGKINQAEWRYLLSGGSIQTMFENPAPQWLSDRAWRDILALSNLPTFATFSNDFVMYLSEFQAIFDSAEPHRELLPGIWNAYLDEFQKLLILRCLRGDKVTNAMQDFVATHLEPRFIEPQTANLSAVFKESNSTTPLIFVLSPGTDPAADLYKFAEEMKFSKKFSAISLGQGQGPRAEAMMRNSIERGKWVFFQNCHLAPSWMPALERLIEHINPDKVHRDFRLWLTSLPSNKFPVSILQNGSKMTIEPPRGVKANLLKSYNSLSDDFLHSCQKVVEFKSLLLSLCLFHGNALERRKFGPLGFNIPYEFTDGDLRICISQLKMFLDEYEDIPYKVLKYTAGEINYGGRVTDDWDRRCVMNILEDFYNPAVLSSEHSYSNSGIYHQIPPTYDLNGYLSYIKSLPLNDMPEIFGLHDNANITFAQNETFALFNAILQLQPKSSSMGGQSREELVEDVAENILLQVPGPIELQEVTKKFPVLYEESMNTVLVQEVIRYNKLLEVITQTLSDMLKAIKGLVVMSLELELMSISLYNNTVPELWKSKAYPSLKPLASWIMDLLLRLDFMHSWINDGIPPVFWISGFFFPQAFLTGTLQNFARKFVISIDTITFDFKVLPEASSEIKERPQTGCYIHGLFLEGARWDSMNFQLAESRPKELYTEMAVIWLLPEANRKVQNQDFYLCPIYKTLTRAGTLSTTGHSTNYVIAVEIPSNQPQRHWIKRGVALICALDY.

The interval 1-73 (MEECNKEGPS…KSPLTGTDKK (73 aa)) is disordered. The stem stretch occupies residues 1–1527 (MEECNKEGPS…YIRAVNAEFI (1527 aa)). Residues 24 to 42 (PESHDLEKILQESNYHPER) are compositionally biased toward basic and acidic residues. Over residues 46-55 (NPDPKTPPLP) the composition is skewed to pro residues. 4 AAA regions span residues 1528–1749 (YGYE…VISA), 1809–2042 (QAIR…NTVK), 2174–2434 (TMMP…VFQG), and 2532–2784 (DYNQ…LARH). The GPAGTGKT motif motif lies at 1566–1573 (GPAGTGKT). 1566-1573 (GPAGTGKT) contacts ATP. Residues 1616–1622 (CFDEFNR) carry the CFDEFNR motif motif. ATP is bound by residues 1847–1854 (GPTGSGKS), 2212–2219 (GPTGTGKT), and 2571–2578 (GVGGSGRS). Residues 2799–3097 (FSILIGQKKM…EELEMKCEQC (299 aa)) are stalk. Positions 3045–3128 (LREAQDDLEV…QETVENLENM (84 aa)) form a coiled coil. 2 AAA regions span residues 3182–3412 (LGNP…EIQA) and 3625–3844 (MQDF…QLKM).

It belongs to the dynein heavy chain family. As to quaternary structure, consists of at least two heavy chains and a number of intermediate and light chains.

The protein resides in the cytoplasm. The protein localises to the cytoskeleton. It is found in the cilium axoneme. It localises to the cell projection. Its subcellular location is the cilium. The protein resides in the flagellum. Force generating protein of cilia required for sperm flagellum motility. Produces force towards the minus ends of microtubules. Dynein has ATPase activity; the force-producing power stroke is thought to occur on release of ADP. Required in spermatozoa for the formation of the inner dynein arms and biogenesis of the axoneme. This Mus musculus (Mouse) protein is Dynein axonemal heavy chain 1.